Consider the following 511-residue polypeptide: ATP synthase subunit alpha (511 aa).

170–177 (GDRQTGKT) provides a ligand contact to ATP.

Belongs to the ATPase alpha/beta chains family. F-type ATPases have 2 components, CF(1) - the catalytic core - and CF(0) - the membrane proton channel. CF(1) has five subunits: alpha(3), beta(3), gamma(1), delta(1), epsilon(1). CF(0) has three main subunits: a(1), b(2) and c(9-12). The alpha and beta chains form an alternating ring which encloses part of the gamma chain. CF(1) is attached to CF(0) by a central stalk formed by the gamma and epsilon chains, while a peripheral stalk is formed by the delta and b chains.

It localises to the cell inner membrane. It carries out the reaction ATP + H2O + 4 H(+)(in) = ADP + phosphate + 5 H(+)(out). Functionally, produces ATP from ADP in the presence of a proton gradient across the membrane. The alpha chain is a regulatory subunit. This is ATP synthase subunit alpha from Granulibacter bethesdensis (strain ATCC BAA-1260 / CGDNIH1).